The sequence spans 290 residues: Ubiquinone biosynthesis protein COQ4, mitochondrial (290 aa).

A mitochondrion-targeting transit peptide spans 1–32 (MAKRVCVGDLRKLAGSVSTPSRCILPPHARCF). His168, Asp169, His172, and Glu184 together coordinate Zn(2+). Residues 260 to 290 (KPPDLREMRKAEREAQKKDKEAKETMTRAAV) are disordered.

Belongs to the COQ4 family. Component of a multi-subunit COQ enzyme complex, composed of at least COQ3, COQ4, COQ5, COQ6, COQ7 and COQ9. Zn(2+) serves as cofactor.

It is found in the mitochondrion inner membrane. It catalyses the reaction a 4-hydroxy-3-methoxy-5-(all-trans-polyprenyl)benzoate + H(+) = a 2-methoxy-6-(all-trans-polyprenyl)phenol + CO2. The protein operates within cofactor biosynthesis; ubiquinone biosynthesis. Lyase that catalyzes the C1-decarboxylation of 4-hydroxy-3-methoxy-5-(all-trans-polyprenyl)benzoic acid into 2-methoxy-6-(all-trans-polyprenyl)phenol during ubiquinone biosynthesis. This Phaeosphaeria nodorum (strain SN15 / ATCC MYA-4574 / FGSC 10173) (Glume blotch fungus) protein is Ubiquinone biosynthesis protein COQ4, mitochondrial.